The sequence spans 189 residues: Photosystem I assembly protein Ycf4 (189 aa).

The next 2 membrane-spanning stretches (helical) occupy residues 25-45 (SVYFWAVALTGGGLGFTLAGL) and 62-82 (LVFIPQGIAMLFYGVLGSLAG).

The protein belongs to the Ycf4 family.

The protein localises to the cellular thylakoid membrane. Functionally, seems to be required for the assembly of the photosystem I complex. The polypeptide is Photosystem I assembly protein Ycf4 (Synechococcus sp. (strain JA-2-3B'a(2-13)) (Cyanobacteria bacterium Yellowstone B-Prime)).